Reading from the N-terminus, the 131-residue chain is Probable calcium-binding protein CML34 (131 aa).

EF-hand domains lie at 1–33, 34–69, 70–97, and 98–131; these read MSAK…FSPY, FTQE…MLKE, VFVF…LGKK, and FTEE…IGDI. Residues aspartate 11, asparagine 13, aspartate 15, lysine 17, glutamate 22, aspartate 47, aspartate 49, asparagine 51, glutamate 53, and glutamate 58 each coordinate Ca(2+). Ca(2+)-binding residues include aspartate 111, aspartate 113, aspartate 115, tyrosine 117, and glutamate 122.

Functionally, potential calcium sensor. This is Probable calcium-binding protein CML34 (CML34) from Arabidopsis thaliana (Mouse-ear cress).